The chain runs to 244 residues: E3 ubiquitin-protein ligase RNF166 (244 aa).

Residues 10-30 (AQRPQAPGPGPPRPPPPAGPA) form a disordered region. Pro residues predominate over residues 15–28 (APGPGPPRPPPPAG). An RING-type zinc finger spans residues 40 to 80 (CPICLEVFHRAVGIAGCGHTFCGECLQPCLQVPSPLCPLCR). Residues Cys-105, Cys-108, His-120, and Cys-124 each coordinate Zn(2+). A C2HC RNF-type zinc finger spans residues 105-124 (CRGCSKKVTLAKMRSHVSSC). The UIM domain maps to 228 to 244 (DEEAALQAALALSLSEN).

The protein resides in the cytoplasm. The catalysed reaction is S-ubiquitinyl-[E2 ubiquitin-conjugating enzyme]-L-cysteine + [acceptor protein]-L-lysine = [E2 ubiquitin-conjugating enzyme]-L-cysteine + N(6)-ubiquitinyl-[acceptor protein]-L-lysine.. The protein operates within protein modification; protein ubiquitination. In terms of biological role, E3 ubiquitin-protein ligase that promotes the ubiquitination of different substrates. This chain is E3 ubiquitin-protein ligase RNF166 (RNF166), found in Gallus gallus (Chicken).